The sequence spans 161 residues: Large ribosomal subunit protein uL29c (161 aa).

The N-terminal 61 residues, 1–61 (MATMSLAAAS…ERRAAAMVAM (61 aa)), are a transit peptide targeting the chloroplast.

The protein belongs to the universal ribosomal protein uL29 family. Part of the 50S ribosomal subunit.

It is found in the plastid. It localises to the chloroplast. In Zea mays (Maize), this protein is Large ribosomal subunit protein uL29c (RPL29).